We begin with the raw amino-acid sequence, 183 residues long: Capsid protein (183 aa).

The tract at residues 143 to 183 is disordered; it reads LPETAVVRRRGRSPRRRTPSPRRRRSQSPRRRRSQSPASQC. The span at 149–176 shows a compositional bias: basic residues; the sequence is VRRRGRSPRRRTPSPRRRRSQSPRRRRS. Residues S155, S162, and S170 each carry the phosphoserine; by host modification. One copy of the 1; half-length repeat lies at 155 to 161; it reads SPRRRTP. The tract at residues 155–177 is 3 X 8 AA repeats of S-P-R-R-R-[PR]-S-Q; it reads SPRRRTPSPRRRRSQSPRRRRSQ. Residues 158–175 carry the Bipartite nuclear localization signal motif; sequence RRTPSPRRRRSQSPRRRR. A run of 2 repeats spans residues 162-169 and 170-177. The segment at 177–183 is RNA binding; the sequence is QSPASQC.

This sequence belongs to the orthohepadnavirus core antigen family. In terms of assembly, homodimerizes, then multimerizes. Interacts with cytosol exposed regions of viral L glycoprotein present in the reticulum-to-Golgi compartment. Interacts with human FLNB. Phosphorylated form interacts with host importin alpha; this interaction depends on the exposure of the NLS, which itself depends upon genome maturation and/or phosphorylation of the capsid protein. Interacts with host NUP153. In terms of processing, phosphorylated by host SRPK1, SRPK2, and maybe protein kinase C or GAPDH. Phosphorylation is critical for pregenomic RNA packaging. Protein kinase C phosphorylation is stimulated by HBx protein and may play a role in transport of the viral genome to the nucleus at the late step during the viral replication cycle.

It localises to the virion. It is found in the host cytoplasm. Its function is as follows. Self assembles to form an icosahedral capsid. Most capsids appear to be large particles with an icosahedral symmetry of T=4 and consist of 240 copies of capsid protein, though a fraction forms smaller T=3 particles consisting of 180 capsid proteins. Entering capsids are transported along microtubules to the nucleus. Phosphorylation of the capsid is thought to induce exposure of nuclear localization signal in the C-terminal portion of the capsid protein that allows binding to the nuclear pore complex via the importin (karyopherin-) alpha and beta. Capsids are imported in intact form through the nuclear pore into the nuclear basket, where it probably binds NUP153. Only capsids that contain the mature viral genome can release the viral DNA and capsid protein into the nucleoplasm. Immature capsids get stuck in the basket. Capsids encapsulate the pre-genomic RNA and the P protein. Pre-genomic RNA is reverse-transcribed into DNA while the capsid is still in the cytoplasm. The capsid can then either be directed to the nucleus, providing more genomes for transcription, or bud through the endoplasmic reticulum to provide new virions. The sequence is that of Capsid protein from Gorilla gorilla (western gorilla).